Here is a 69-residue protein sequence, read N- to C-terminus: uncharacterized protein (69 aa).

The first 16 residues, 1–16, serve as a signal peptide directing secretion; the sequence is MSLGLIFALLLTHAAA.

This is an uncharacterized protein from Archaeoglobus fulgidus (strain ATCC 49558 / DSM 4304 / JCM 9628 / NBRC 100126 / VC-16).